The following is a 155-amino-acid chain: Fibroblast growth factor 2 (155 aa).

A propeptide spanning residues 1-9 is cleaved from the precursor; that stretch reads MAAGSITTL. A disordered region spans residues 1–20; it reads MAAGSITTLPALPEDGGSGA. Residue Asn36 coordinates heparin. The Cell attachment site; atypical signature appears at 46-48; it reads DGR. Tyr82 carries the phosphotyrosine; by TEC modification. The short motif at 88 to 90 is the Cell attachment site; atypical element; it reads DGR. Residue Lys95 forms a Glycyl lysine isopeptide (Lys-Gly) (interchain with G-Cter in SUMO1) linkage. Residues 128 to 144 form a heparin-binding region; it reads KRTGQYKLGPKTGPGQK.

The protein belongs to the heparin-binding growth factors family. Monomer. Homodimer. Interacts with FGFR1, FGFR2, FGFR3 and FGFR4. Affinity between fibroblast growth factors (FGFs) and their receptors is increased by heparan sulfate glycosaminoglycans that function as coreceptors. Interacts with CSPG4, FGFBP1 and TEC. Found in a complex with FGFBP1, FGF1 and FGF2. Interacts with FGFBP3. Interacts with integrin ITGAV:ITGB3; the interaction is required for FGF2 signaling. Interacts with SNORC (via the extracellular domain). Interacts with glypican GPC3. In terms of processing, phosphorylation at Tyr-82 regulates FGF2 unconventional secretion.

It localises to the secreted. The protein localises to the nucleus. Functionally, acts as a ligand for FGFR1, FGFR2, FGFR3 and FGFR4. Also acts as an integrin ligand which is required for FGF2 signaling. Binds to integrin ITGAV:ITGB3. Plays an important role in the regulation of cell survival, cell division, cell differentiation and cell migration. Functions as a potent mitogen in vitro. Can induce angiogenesis. Mediates phosphorylation of ERK1/2 and thereby promotes retinal lens fiber differentiation. This Bos taurus (Bovine) protein is Fibroblast growth factor 2 (FGF2).